We begin with the raw amino-acid sequence, 262 residues long: Ribosomal RNA small subunit methyltransferase A (262 aa).

Residues H13, L15, G40, E61, D85, and N103 each contribute to the S-adenosyl-L-methionine site.

Belongs to the class I-like SAM-binding methyltransferase superfamily. rRNA adenine N(6)-methyltransferase family. RsmA subfamily.

It is found in the cytoplasm. It carries out the reaction adenosine(1518)/adenosine(1519) in 16S rRNA + 4 S-adenosyl-L-methionine = N(6)-dimethyladenosine(1518)/N(6)-dimethyladenosine(1519) in 16S rRNA + 4 S-adenosyl-L-homocysteine + 4 H(+). Its function is as follows. Specifically dimethylates two adjacent adenosines (A1518 and A1519) in the loop of a conserved hairpin near the 3'-end of 16S rRNA in the 30S particle. May play a critical role in biogenesis of 30S subunits. This chain is Ribosomal RNA small subunit methyltransferase A, found in Bordetella petrii (strain ATCC BAA-461 / DSM 12804 / CCUG 43448).